A 248-amino-acid polypeptide reads, in one-letter code: Neurotrophic factor BDNF precursor form (248 aa).

An N-terminal signal peptide occupies residues 1–18 (MTILFLTMVISYFSCMKA). Positions 19-129 (APMKEANVRG…AANMSMRVRR (111 aa)) are excised as a propeptide. Asn-122 is a glycosylation site (N-linked (GlcNAc...) asparagine). 3 disulfides stabilise this stretch: Cys-142–Cys-209, Cys-187–Cys-238, and Cys-197–Cys-240.

Belongs to the NGF-beta family. In terms of assembly, monomers and homodimers. Binds to NTRK2/TRKB. Can form heterodimers with other neurotrophin family members, such as NTF3 and NTF4 (in vitro), but the physiological relevance of this is not clear. BDNF precursor form: interacts with the heterodimer formed by NGFR and SORCS2. Mature BDNF has much lower affinity for the heterodimer formed by NGFR and SORCS2. N-glycosylated and glycosulfated, contrary to mature BDNF. In terms of processing, mature BDNF is produced by proteolytic removal of the propeptide, catalyzed by a FURIN family member. In addition, the precursor form is proteolytically cleaved within the propeptide, but this is not an obligatory intermediate for the production of mature BDNF. Can be converted into mature BDNF by plasmin (PLG).

The protein resides in the secreted. Its function is as follows. Important signaling molecule that activates signaling cascades downstream of NTRK2. During development, promotes the survival and differentiation of selected neuronal populations of the peripheral and central nervous systems. Participates in axonal growth, pathfinding and in the modulation of dendritic growth and morphology. Major regulator of synaptic transmission and plasticity at adult synapses in many regions of the CNS. The versatility of BDNF is emphasized by its contribution to a range of adaptive neuronal responses including long-term potentiation (LTP), long-term depression (LTD), certain forms of short-term synaptic plasticity, as well as homeostatic regulation of intrinsic neuronal excitability. Important signaling molecule that activates signaling cascades downstream of NTRK2. Activates signaling cascades via the heterodimeric receptor formed by NGFR and SORCS2. Signaling via NGFR and SORCS2 plays a role in synaptic plasticity and long-term depression (LTD). Binding to NGFR and SORCS2 promotes neuronal apoptosis. Promotes neuronal growth cone collapse. The polypeptide is Neurotrophic factor BDNF precursor form (BDNF) (Lipotes vexillifer (Yangtze river dolphin)).